Reading from the N-terminus, the 339-residue chain is Endospore coat-associated protein YutH (339 aa).

This sequence belongs to the CotS family.

The protein resides in the forespore outer membrane. It is found in the spore coat. Involved in sporulation. The protein is Endospore coat-associated protein YutH (yutH) of Bacillus subtilis (strain 168).